Reading from the N-terminus, the 149-residue chain is Transcription factor HY5-like (149 aa).

The interval 1-77 is disordered; it reads MSLQRPNGNS…RRRGRNPVDK (77 aa). The interval 23-36 is interaction with COP1; the sequence is ESDEELLMVPDMEA. A Phosphoserine modification is found at Ser-24. The segment covering 55–64 has biased composition (polar residues); that stretch reads ELDQTQNGVS. One can recognise a bZIP domain in the interval 78 to 141; sequence EYRSLKRLLR…TMLRKMLINT (64 aa). Residues 80–100 form a basic motif region; the sequence is RSLKRLLRNRVSAQQARERKK. Positions 106 to 134 are leucine-zipper; the sequence is LESRANELQNNNDQLEEKISTLTNENTML.

The protein belongs to the bZIP family. As to quaternary structure, heterodimer; heterodimerizes with HY5 via the leucine-zipper domains. Interacts with COP1 WD40 domain. Interacts with BBX24/STO and BBX25/STH. Post-translationally, ubiquitinated by COP1. Ubiquitination takes place in darkness and leads to its subsequent degradation, thereby preventing the activation of photomorphogenesis signals.

Its subcellular location is the nucleus. Its function is as follows. Transcription factor that promotes photomorphogenesis in light. Acts downstream of the light receptor network and directly affects transcription of light-induced genes. Specifically involved in the blue light specific pathway, suggesting that it participates in transmission of cryptochromes (CRY1 and CRY2) signals to downstream responses. In darkness, its degradation prevents the activation of light-induced genes. The polypeptide is Transcription factor HY5-like (HYH) (Arabidopsis thaliana (Mouse-ear cress)).